The chain runs to 347 residues: Phenylalanine--tRNA ligase alpha subunit (347 aa).

E261 serves as a coordination point for Mg(2+).

Belongs to the class-II aminoacyl-tRNA synthetase family. Phe-tRNA synthetase alpha subunit type 1 subfamily. Tetramer of two alpha and two beta subunits. Requires Mg(2+) as cofactor.

Its subcellular location is the cytoplasm. The enzyme catalyses tRNA(Phe) + L-phenylalanine + ATP = L-phenylalanyl-tRNA(Phe) + AMP + diphosphate + H(+). This Streptococcus pyogenes serotype M3 (strain ATCC BAA-595 / MGAS315) protein is Phenylalanine--tRNA ligase alpha subunit.